A 427-amino-acid polypeptide reads, in one-letter code: Putative FBD-associated F-box protein At3g50710 (427 aa).

Positions 1 to 53 (MDRISNLSDDLLLKIVSSLPTKDVVVTMLLSKRWKFLWMMVPKLRFDDEFELE) constitute an F-box domain. The region spanning 345 to 395 (HWEEPSSVPQCLLFHLNIFEWKYYNAGDEEKKVVAYILKNARQLKTATFSA) is the FBD domain.

This chain is Putative FBD-associated F-box protein At3g50710, found in Arabidopsis thaliana (Mouse-ear cress).